The primary structure comprises 347 residues: MQVGIVGGSGYIAGQLLRMLAFHKDIEIKIVSSKSHAGEKLSRVHPDLLNILDLRFSDMDPVDLASRVDLVFLALPHGTSINYVPDIYEIGTKIIDMSADFRLKDPDLYREWYGFEHNYPDLLEKFVYGMPEFHRNEIKNSRYVSVPGCIASSTIYSVAPFSMLNLDNNIVTVDAKVGSSGSGSGTDSSKNYSERYNSVRAYKPVHHRHTPEIEQEIKYISGKNIKIAMSAHSVNMVRGILTTSNIFIDLDEPDALSQLREFYKNEKFIRLIFDRKSNFRYPDPKTVIGTNFADLGVISDGYIKRIVSLGAIDNMIKGAAGNAIQSMNIMNHFDESEGLLIPAAFPV.

9–12 (SGYI) lines the NADP(+) pocket. Cys-149 is a catalytic residue. Asn-314 serves as a coordination point for NADP(+).

This sequence belongs to the NAGSA dehydrogenase family. Type 1 subfamily. LysY sub-subfamily.

Its subcellular location is the cytoplasm. It carries out the reaction [amino-group carrier protein]-C-terminal-N-(1-carboxy-5-oxopentan-1-yl)-L-glutamine + phosphate + NADP(+) = [amino-group carrier protein]-C-terminal-N-(1-carboxy-5-phosphooxy-5-oxopentan-1-yl)-L-glutamine + NADPH + H(+). The catalysed reaction is [amino-group carrier protein]-C-terminal-gamma-(L-glutamyl-5-semialdehyde)-L-glutamate + phosphate + NADP(+) = [amino-group carrier protein]-C-terminal-gamma-(5-phospho-L-glutamyl)-L-glutamate + NADPH + H(+). It participates in amino-acid biosynthesis; L-lysine biosynthesis via AAA pathway; L-lysine from L-alpha-aminoadipate (Thermus route): step 3/5. It functions in the pathway amino-acid biosynthesis; L-arginine biosynthesis. Functionally, involved in both the arginine and lysine biosynthetic pathways. The protein is Putative [LysW]-L-2-aminoadipate/[LysW]-L-glutamate phosphate reductase of Picrophilus torridus (strain ATCC 700027 / DSM 9790 / JCM 10055 / NBRC 100828 / KAW 2/3).